The sequence spans 1642 residues: Cortactin-binding protein 2 (1642 aa).

Disordered stretches follow at residues 1–27 (MATDGASCEPDFSRAPEDAAGAPAEAA), 203–222 (KKKTSALEEELATEKRRSTE), 366–433 (IGAS…HPGL), 446–471 (GSNANDPDQNGNTTQSPPSRDVSPTS), and 491–611 (RFTS…PSID). Positions 119-276 (RKMQERMSTQ…EQLKRGTDSK (158 aa)) form a coiled coil. Over residues 385–394 (GPSTGSTADL) the composition is skewed to polar residues. Residues 395 to 407 (TSSPTPVPSTVSP) are compositionally biased toward low complexity. Arg-491 is modified (asymmetric dimethylarginine). The span at 497-506 (AGAPPRPGAP) shows a compositional bias: pro residues. A compositionally biased stretch (polar residues) spans 576-586 (TVASPPSTLPQ). ANK repeat units follow at residues 702–732 (GRPTLLQQAAAQGNVTLLSMLLNEEGLDINY), 736–765 (DGHSALYSAAKNGHTDCVRLLLNAEAQVNA), 769–798 (NGFTPLCAAAAQGHFKCVELLIAYDANINH), 802–831 (GGQTPLYLACKNGNKECIKLLLEAGTDRSV), 835–864 (DGWTPIHAAVDTGNVDSLKLLMYHRAPAHG), and 904–934 (EGWTAAHIAASKGFKNCLEVLCRHGGLEPER). The disordered stretch occupies residues 1441–1469 (SGAWRKVSTSPRKKSGRFSSPTWNKPDLS). At Ser-1513 the chain carries Phosphoserine. Residues 1545–1642 (LRRFDSSGNN…NSRDLEPTQK (98 aa)) form a disordered region. Composition is skewed to polar residues over residues 1552–1563 (GNNPVFSATVNN) and 1571–1588 (KEVSPLSSHQTTECSNSK). Residues 1613–1627 (SQNTKRSSSSSNTRQ) are compositionally biased toward low complexity.

As to quaternary structure, interacts with CTTN/cortactin SH3 domain. Interacts with STRN, STRN4/zinedin and MOB4/phocein; this interactions mediate the association with the STRIPAK core complex and may regulate dendritic spine distribution of the STRIPAK complex in hippocampal neurons. Activation of glutamate receptors weakens the interaction with STRN and STRN4.

Its subcellular location is the cytoplasm. The protein localises to the cell cortex. It is found in the cell projection. It localises to the dendritic spine. Its function is as follows. Regulates the dendritic spine distribution of CTTN/cortactin in hippocampal neurons, and thus controls dendritic spinogenesis and dendritic spine maintenance. Associates with the striatin-interacting phosphatase and kinase (STRIPAK) core complex to regulate dendritic spine distribution of the STRIPAK complex in hippocampal neurons. This is Cortactin-binding protein 2 (CTTNBP2) from Muntiacus muntjak (Barking deer).